Reading from the N-terminus, the 199-residue chain is Recombination protein RecR (199 aa).

The segment at 57–72 adopts a C4-type zinc-finger fold; that stretch reads CQQCRTFTEQNLCAIC. The region spanning 81 to 176 is the Toprim domain; it reads GMICVVEMPV…KVSRIAHGVP (96 aa).

It belongs to the RecR family.

Functionally, may play a role in DNA repair. It seems to be involved in an RecBC-independent recombinational process of DNA repair. It may act with RecF and RecO. The polypeptide is Recombination protein RecR (Psychromonas ingrahamii (strain DSM 17664 / CCUG 51855 / 37)).